The primary structure comprises 740 residues: Protein SIEVE ELEMENT OCCLUSION B (740 aa).

Positions 1–23 are enriched in polar residues; it reads MESLIKSQHAQQLAGHKNTTGKT. The tract at residues 1-27 is disordered; the sequence is MESLIKSQHAQQLAGHKNTTGKTPSME.

As to quaternary structure, can form homodimer. As to expression, expressed in phloem sieve elements.

Its function is as follows. Scaffold protein required to form the phloem filament matrix in sieve elements. This chain is Protein SIEVE ELEMENT OCCLUSION B, found in Arabidopsis thaliana (Mouse-ear cress).